Consider the following 463-residue polypeptide: ATP sulfurylase 1, chloroplastic (463 aa).

A chloroplast-targeting transit peptide spans 1 to 48 (MASMAAVLSKTPFLSQPLTKSSPNSDLPFAAVSFPSKSLRRRVGSIRA).

This sequence belongs to the sulfate adenylyltransferase family. Homotetramer.

The protein localises to the plastid. Its subcellular location is the chloroplast stroma. The catalysed reaction is sulfate + ATP + H(+) = adenosine 5'-phosphosulfate + diphosphate. Its pathway is sulfur metabolism; hydrogen sulfide biosynthesis; sulfite from sulfate: step 1/3. In terms of biological role, mediates selenate (Se) reduction, and promotes Se and sulfur (S) uptake and assimilation. The protein is ATP sulfurylase 1, chloroplastic (APS1) of Arabidopsis thaliana (Mouse-ear cress).